The sequence spans 307 residues: NAD kinase 2 (307 aa).

Aspartate 77 acts as the Proton acceptor in catalysis. Residues 77-78, 151-152, aspartate 181, 192-197, and asparagine 251 each bind NAD(+); these read DG, NE, and TAYALS.

Belongs to the NAD kinase family. The cofactor is a divalent metal cation.

Its subcellular location is the cytoplasm. The catalysed reaction is NAD(+) + ATP = ADP + NADP(+) + H(+). In terms of biological role, involved in the regulation of the intracellular balance of NAD and NADP, and is a key enzyme in the biosynthesis of NADP. Catalyzes specifically the phosphorylation on 2'-hydroxyl of the adenosine moiety of NAD to yield NADP. The polypeptide is NAD kinase 2 (Thermosynechococcus vestitus (strain NIES-2133 / IAM M-273 / BP-1)).